Here is a 101-residue protein sequence, read N- to C-terminus: Small ribosomal subunit protein bS18c (101 aa).

Belongs to the bacterial ribosomal protein bS18 family. In terms of assembly, part of the 30S ribosomal subunit.

The protein resides in the plastid. Its subcellular location is the chloroplast. The polypeptide is Small ribosomal subunit protein bS18c (Eucalyptus globulus subsp. globulus (Tasmanian blue gum)).